A 391-amino-acid polypeptide reads, in one-letter code: MTQFTTELLNFLAQKQDIDEFFRTSLETAMNDLLQAELSAFLGYEPYDKVGYNSGNSRNGSYSRQFETKYGTVQLSIPRDRNGNFSPALLPAYGRRDDHLEEMVIKLYQTGVTTREISDIIERMYGHHYSPATISNISKATQENVATFHERSLEANYSVLFLDGTYLPLRRGTVSKECIHIALGITPEGQKAVLGYEIAPNENNASWSTLLDKLQNQGIQQVSLVVTDGFKGLEQIISQAYPLAKQQRCLIHISRNLASKVKRADRAVILEQFKTIYRAENLEMAVQALENFIAEWKPKYRKVMESLENTDNLLTFYQFPYQIWHSIYSTNLIESLNKEIKRQTKKKVLFPNEEALERYLVTLFEDYNFKQSQRIHKGFGQCADTLESLFD.

The protein belongs to the transposase mutator family.

Functionally, required for the transposition of the insertion element. This is Transposase for insertion sequence element IS905 (tra905) from Lactococcus lactis subsp. lactis (strain IL1403) (Streptococcus lactis).